A 609-amino-acid polypeptide reads, in one-letter code: (R)-linalool synthase TPS5, chloroplastic (609 aa).

The transit peptide at 1-42 (MVSILSNIGMMVVTFKRPSLFTSLRRRSANNIIITKHSHPIS) directs the protein to the chloroplast. Positions 325, 362, 366, 503, and 506 each coordinate (2E)-geranyl diphosphate. Asp362 and Asp366 together coordinate Mg(2+). The short motif at 362–366 (DDIYD) is the DDXXD motif element. Mg(2+)-binding residues include Asp506, Thr510, and Glu514.

The protein belongs to the terpene synthase family. Tpsb subfamily. The cofactor is Mg(2+). Requires Mn(2+) as cofactor. In terms of tissue distribution, highly expressed in young fruits and plant tops. Expressed in flower buds and trichomes of petioles and stems. Expressed at low levels in young leaves, stems, petioles, sepals and petals.

The protein resides in the plastid. It localises to the chloroplast. The catalysed reaction is (2E)-geranyl diphosphate + H2O = (R)-linalool + diphosphate. It catalyses the reaction (2E,6E)-farnesyl diphosphate + H2O = (6E)-nerolidol + diphosphate. It participates in secondary metabolite biosynthesis; terpenoid biosynthesis. Its function is as follows. Involved in monoterpene (C10) biosynthesis in glandular trichomes. Converts geranyl diphosphate to linalool in glandular trichomes in response to jasmonate (JA). Can convert farnesyl diphosphate to nerolidol in vitro. The chain is (R)-linalool synthase TPS5, chloroplastic from Solanum lycopersicum (Tomato).